Here is a 332-residue protein sequence, read N- to C-terminus: Arrestin domain-containing protein 5 (332 aa).

The tract at residues Ser311–Asn332 is disordered.

The protein belongs to the arrestin family.

It localises to the membrane. Functionally, plays an essential role in spermatogenesis. May be involved in the anchoring of the sperm head to the tail during spermatogenesis by affecting SEC22A-mediated SUN5 and NDC1 transport and localization. The sequence is that of Arrestin domain-containing protein 5 (ARRDC5) from Bos taurus (Bovine).